Reading from the N-terminus, the 219-residue chain is MSIQVFCDFDGTITNNDNIMSIMEKFAPPEAEEVKNKILSQELSIQEGVSQLFQLIPTNLHDDIIQFLIETAEIRSGFHEFIQFVKENNISFYVISGGMDFFVYPLLQGIIPKEQIYCNETDFSAEFITVKWPHSCDDHCQIHCGLCKSSLIRKLSDTDDFHIVIGDSITDLQAAKQADKVFARDFLITKCEENHIAYTPFETFQDVQAELKLLLEVKA.

It belongs to the HAD-like hydrolase superfamily. MtnX family.

It carries out the reaction 2-hydroxy-5-methylsulfanyl-3-oxopent-1-enyl phosphate + H2O = 1,2-dihydroxy-5-(methylsulfanyl)pent-1-en-3-one + phosphate. The protein operates within amino-acid biosynthesis; L-methionine biosynthesis via salvage pathway; L-methionine from S-methyl-5-thio-alpha-D-ribose 1-phosphate: step 4/6. In terms of biological role, dephosphorylates 2-hydroxy-3-keto-5-methylthiopentenyl-1-phosphate (HK-MTPenyl-1-P) yielding 1,2-dihydroxy-3-keto-5-methylthiopentene (DHK-MTPene). The sequence is that of 2-hydroxy-3-keto-5-methylthiopentenyl-1-phosphate phosphatase from Bacillus cereus (strain ATCC 14579 / DSM 31 / CCUG 7414 / JCM 2152 / NBRC 15305 / NCIMB 9373 / NCTC 2599 / NRRL B-3711).